A 270-amino-acid chain; its full sequence is Phosphatidylglycerol--prolipoprotein diacylglyceryl transferase (270 aa).

Helical transmembrane passes span 18–38, 55–75, 89–109, and 115–135; these read IAVH…LWLA, LVLF…VIFQ, IWNG…TGII, and GLSF…GQAI. Arg-137 is a binding site for a 1,2-diacyl-sn-glycero-3-phospho-(1'-sn-glycerol). The next 3 membrane-spanning stretches (helical) occupy residues 177–197, 205–225, and 236–256; these read QPTF…LLLL, GELF…IEGL, and LRIA…LIAY.

This sequence belongs to the Lgt family.

Its subcellular location is the cell membrane. It catalyses the reaction L-cysteinyl-[prolipoprotein] + a 1,2-diacyl-sn-glycero-3-phospho-(1'-sn-glycerol) = an S-1,2-diacyl-sn-glyceryl-L-cysteinyl-[prolipoprotein] + sn-glycerol 1-phosphate + H(+). Its pathway is protein modification; lipoprotein biosynthesis (diacylglyceryl transfer). In terms of biological role, catalyzes the transfer of the diacylglyceryl group from phosphatidylglycerol to the sulfhydryl group of the N-terminal cysteine of a prolipoprotein, the first step in the formation of mature lipoproteins. In Bacillus licheniformis (strain ATCC 14580 / DSM 13 / JCM 2505 / CCUG 7422 / NBRC 12200 / NCIMB 9375 / NCTC 10341 / NRRL NRS-1264 / Gibson 46), this protein is Phosphatidylglycerol--prolipoprotein diacylglyceryl transferase.